Here is a 345-residue protein sequence, read N- to C-terminus: Membrane progestin receptor alpha (345 aa).

At 1 to 74 the chain is on the cytoplasmic side; it reads MAMAVAQKFN…FQRHNEAVNV (74 aa). The chain crosses the membrane as a helical span at residues 75-95; sequence WTHLLAALALLLRLIGLAASV. At 96-102 the chain is on the extracellular side; sequence DFREDPH. Residues 103–123 traverse the membrane as a helical segment; that stretch reads ALPLFFIVLASFTYLSFSAVA. The Cytoplasmic segment spans residues 124–136; sequence HLLQAKSEFWHYS. The helical transmembrane segment at 137-157 threads the bilayer; sequence FFFLDYVGVAVYQFGSALAHF. At 158–168 the chain is on the extracellular side; that stretch reads YYAIEPSWHDK. A helical transmembrane segment spans residues 169-189; sequence VQAIFLPTAAFLAWLSCAGSC. The Cytoplasmic segment spans residues 190–243; the sequence is YNKYSQKPGLLGRIFQEAPSALAYVLDISPVLHRIIVSPLPAEEDPALLYHKCQ. A helical membrane pass occupies residues 244–264; it reads VVFFLLAAAFFSTVMPESWFP. Residues 265–268 are Extracellular-facing; it reads GSCH. The helical transmembrane segment at 269 to 289 threads the bilayer; the sequence is IFGQGHQVFHVFLVLCTLAQL. Residues 290-315 lie on the Cytoplasmic side of the membrane; the sequence is EAVTLDYQARRGIYEPLHARWPHNFS. Residues 316–336 traverse the membrane as a helical segment; that stretch reads GLFLLTVASSSLTALLLSQLV. Topologically, residues 337 to 345 are extracellular; sequence RRKLHQKTK.

Belongs to the ADIPOR family. As to expression, detected in most adult tissues. Higher expression found in white fat and liver than brown fat and skeletal muscle.

Its subcellular location is the cell membrane. Plasma membrane progesterone (P4) receptor coupled to G proteins. Seems to act through a G(i) mediated pathway. May be involved in oocyte maturation. Involved in neurosteroid inhibition of apoptosis. Also binds dehydroepiandrosterone (DHEA), pregnanolone, pregnenolone and allopregnanolone. In Mus musculus (Mouse), this protein is Membrane progestin receptor alpha.